We begin with the raw amino-acid sequence, 262 residues long: MHTRTAPRVRPPSRAAKLAGLLYSLLSYLFFLMTLLYLIGFVGNVGVPKTIDSGPGASWPLALLVDVLLITLFAVQHSVMARKSFKQWWRPVVPAPIERATYVLASSVVLVVMFWLWQPIDLRVWQVESRLGSAVLTTLFWLGWGLILVATFLISHFELFGVKQALDALRPAKPVDGSFRTPLLYKIVRHPMYMGFLMAFWATPEMTVGHLVFALTSTIYILIGTQLEEKDLVEIFGEKYRNYQKNVGMLLPSLRRNPGSQD.

5 consecutive transmembrane segments (helical) span residues 22-42, 55-75, 100-120, 134-154, and 195-215; these read LYSL…IGFV, PGAS…LFAV, ATYV…WQPI, AVLT…TFLI, and GFLM…VFAL.

The protein belongs to the nurim family.

It is found in the membrane. It carries out the reaction methanethiol + S-adenosyl-L-methionine = dimethyl sulfide + S-adenosyl-L-homocysteine + H(+). Functionally, catalyzes the methylation of methanethiol (MeSH) to yield dimethylsulphide (DMS). The sequence is that of Methanethiol S-methyltransferase from Pseudomonas deceptionensis.